Reading from the N-terminus, the 167-residue chain is Minor fimbrial protein PrsF (167 aa).

A signal peptide spans 1–18; the sequence is MIRLSLFISLLLTSVAVL.

Its subcellular location is the secreted. The protein localises to the fimbrium. Its function is as follows. Fimbriae (also called pili), polar filaments radiating from the surface of the bacterium to a length of 0.5-1.5 micrometers and numbering 100-300 per cell, enable bacteria to colonize the epithelium of specific host organs. The protein is Minor fimbrial protein PrsF (prsF) of Escherichia coli.